A 378-amino-acid chain; its full sequence is Protein arginine N-methyltransferase 6 (378 aa).

The disordered stretch occupies residues 1 to 46 (MSLSKKRKLESGDSGGAGAGGEGAEEENGGEQEAAPPRPRRTKSER). Residues 13-22 (DSGGAGAGGE) show a composition bias toward gly residues. Arginine 38 carries the post-translational modification Asymmetric dimethylarginine; by autocatalysis. In terms of domain architecture, SAM-dependent MTase PRMT-type spans 47–377 (DQLYYECYSD…EEKTKDFAME (331 aa)). S-adenosyl-L-methionine-binding residues include histidine 60, arginine 69, glycine 93, glutamate 115, and glutamate 144. Catalysis depends on residues glutamate 158 and glutamate 167.

This sequence belongs to the class I-like SAM-binding methyltransferase superfamily. Protein arginine N-methyltransferase family. PRMT6 subfamily. In terms of assembly, interacts with (and methylates) HIV-1 Tat, Rev and Nucleocapsid protein p7 (NC). Interacts with EPB41L3 and NCOA1. Automethylation enhances its stability.

Its subcellular location is the nucleus. It catalyses the reaction L-arginyl-[protein] + 2 S-adenosyl-L-methionine = N(omega),N(omega)-dimethyl-L-arginyl-[protein] + 2 S-adenosyl-L-homocysteine + 2 H(+). Functionally, arginine methyltransferase that can catalyze the formation of both omega-N monomethylarginine (MMA) and asymmetrical dimethylarginine (aDMA), with a strong preference for the formation of aDMA. Preferentially methylates arginyl residues present in a glycine and arginine-rich domain and displays preference for monomethylated substrates. Specifically mediates the asymmetric dimethylation of histone H3 'Arg-2' to form H3R2me2a. H3R2me2a represents a specific tag for epigenetic transcriptional repression and is mutually exclusive with methylation on histone H3 'Lys-4' (H3K4me2 and H3K4me3). Acts as a transcriptional repressor of various genes such as HOXA2, THBS1 and TP53. Repression of TP53 blocks cellular senescence. Also methylates histone H2A and H4 'Arg-3' (H2AR3me and H4R3me, respectively). Acts as a regulator of DNA base excision during DNA repair by mediating the methylation of DNA polymerase beta (POLB), leading to the stimulation of its polymerase activity by enhancing DNA binding and processivity. Methylates HMGA1. Regulates alternative splicing events. Acts as a transcriptional coactivator of a number of steroid hormone receptors including ESR1, ESR2, PGR and NR3C1. Promotes fasting-induced transcriptional activation of the gluconeogenic program through methylation of the CRTC2 transcription coactivator. Methylates GPS2, protecting GPS2 from ubiquitination and degradation. Methylates SIRT7, inhibiting SIRT7 histone deacetylase activity and promoting mitochondria biogenesis. The sequence is that of Protein arginine N-methyltransferase 6 (Prmt6) from Mus musculus (Mouse).